Reading from the N-terminus, the 350-residue chain is Glycerol-1-phosphate dehydrogenase [NAD(P)+] (350 aa).

NAD(+) is bound by residues 97–101 and 119–122; these read GSIID and TTAS. Aspartate 124 lines the substrate pocket. Serine 128 is a binding site for NAD(+). Residue aspartate 171 coordinates substrate. Residues aspartate 171 and histidine 251 each coordinate Zn(2+). Histidine 255 contacts substrate. Zn(2+) is bound at residue histidine 267.

It belongs to the glycerol-1-phosphate dehydrogenase family. Zn(2+) serves as cofactor.

Its subcellular location is the cytoplasm. It catalyses the reaction sn-glycerol 1-phosphate + NAD(+) = dihydroxyacetone phosphate + NADH + H(+). The enzyme catalyses sn-glycerol 1-phosphate + NADP(+) = dihydroxyacetone phosphate + NADPH + H(+). It functions in the pathway membrane lipid metabolism; glycerophospholipid metabolism. Catalyzes the NAD(P)H-dependent reduction of dihydroxyacetonephosphate (DHAP or glycerone phosphate) to glycerol 1-phosphate (G1P). The G1P thus generated is used as the glycerophosphate backbone of phospholipids in the cellular membranes of Archaea. This chain is Glycerol-1-phosphate dehydrogenase [NAD(P)+], found in Thermococcus sibiricus (strain DSM 12597 / MM 739).